Here is a 109-residue protein sequence, read N- to C-terminus: Iron-sulfur cluster assembly protein CyaY (109 aa).

This sequence belongs to the frataxin family.

In terms of biological role, involved in iron-sulfur (Fe-S) cluster assembly. May act as a regulator of Fe-S biogenesis. The polypeptide is Iron-sulfur cluster assembly protein CyaY (Shewanella putrefaciens (strain CN-32 / ATCC BAA-453)).